A 91-amino-acid polypeptide reads, in one-letter code: uncharacterized protein (91 aa).

Positions 1–21 (MKQLLASPSLQLVTYPASATA) are cleaved as a signal peptide.

The protein belongs to the BhsA/McbA family.

It localises to the periplasm. This is an uncharacterized protein from Escherichia coli O157:H7.